Here is a 331-residue protein sequence, read N- to C-terminus: Laforin (331 aa).

The region spanning 1–124 (MRFRFGVVVP…NNLVDGVYCL (124 aa)) is the CBM20 domain. A Phosphoserine; by AMPK modification is found at S25. Residues W32, K87, 103–107 (GPHHD), D197, D235, and R241 each bind substrate. Residues 156–323 (HYSRILPNIW…QEDFFQKFGK (168 aa)) form the Tyrosine-protein phosphatase domain. Residue C266 is the Phosphocysteine intermediate of the active site. The Glucan phosphatase signature motif CXAGXGR signature appears at 266-272 (CNAGVGR). Substrate is bound by residues 267–272 (NAGVGR) and Y304.

This sequence belongs to the protein-tyrosine phosphatase family. In terms of assembly, homodimer. Interacts with itself. Interacts with PPP1R3B, PPP1R3C, PPP1R3D, HIRIP5, and EPM2AIP1. Binds glycogen and Lafora bodies. Interacts with NHLRC1/malin (via the NHL repeats). Forms a complex with NHLRC1/malin and HSP70. Interacts with PPP1R3D; in the presence of NHLC1/malin the interaction leads to ubiquitination and autophagic degradation of PPP1R3D. Interacts (via the phosphatase domain) with MAPT/Tau; the interaction dephosphorylates MAPT. Isoform 1 and isoform 2 interact to form a heterodimeric complex that lacks phosphatase activity (in vitro). Active phosphatase isoform 7 and isoform 1 interact with each other, but give rise to lower phosphatase activity than isoform 1 or isoform 7 by themselves (in vitro). Active phosphatase isoform 7 and inactive isoform 2 interact with each other, but give rise to lower phosphatase activity than isoform 7 by itself (in vitro). Interacts with PRDM8. In terms of processing, polyubiquitinated by NHLRC1/malin. Post-translationally, phosphorylation on Ser-25 by AMPK affects the phosphatase activity of the enzyme and its ability to homodimerize and interact with NHLRC1, PPP1R3C or PRKAA2. In terms of tissue distribution, expressed in heart, skeletal muscle, kidney, pancreas and brain. Isoform 4 is also expressed in the placenta.

Its subcellular location is the cytoplasm. It localises to the endoplasmic reticulum membrane. The protein localises to the cell membrane. The protein resides in the nucleus. It catalyses the reaction O-phospho-L-tyrosyl-[protein] + H2O = L-tyrosyl-[protein] + phosphate. The catalysed reaction is O-phospho-L-seryl-[protein] + H2O = L-seryl-[protein] + phosphate. It carries out the reaction O-phospho-L-threonyl-[protein] + H2O = L-threonyl-[protein] + phosphate. Plays an important role in preventing glycogen hyperphosphorylation and the formation of insoluble aggregates, via its activity as glycogen phosphatase, and by promoting the ubiquitination of proteins involved in glycogen metabolism via its interaction with the E3 ubiquitin ligase NHLRC1/malin. Shows strong phosphatase activity towards complex carbohydrates in vitro, avoiding glycogen hyperphosphorylation which is associated with reduced branching and formation of insoluble aggregates. Dephosphorylates phosphotyrosine and synthetic substrates, such as para-nitrophenylphosphate (pNPP), and has low activity with phosphoserine and phosphothreonine substrates (in vitro). Has been shown to dephosphorylate MAPT. Forms a complex with NHLRC1/malin and HSP70, which suppresses the cellular toxicity of misfolded proteins by promoting their degradation through the ubiquitin-proteasome system (UPS). Acts as a scaffold protein to facilitate PPP1R3C/PTG ubiquitination by NHLRC1/malin. Also promotes proteasome-independent protein degradation through the macroautophagy pathway. In terms of biological role, does not bind to glycogen. Lacks phosphatase activity and might function as a dominant-negative regulator for the phosphatase activity of isoform 1 and isoform 7. Functionally, has phosphatase activity (in vitro). The sequence is that of Laforin (EPM2A) from Homo sapiens (Human).